Here is a 63-residue protein sequence, read N- to C-terminus: Large ribosomal subunit protein bL28 (63 aa).

It belongs to the bacterial ribosomal protein bL28 family.

This is Large ribosomal subunit protein bL28 from Desulfitobacterium hafniense (strain DSM 10664 / DCB-2).